The following is a 1161-amino-acid chain: Lysine-specific demethylase 2A (1161 aa).

At serine 28 the chain carries Phosphoserine. The region spanning phenylalanine 148–aspartate 316 is the JmjC domain. Threonine 209 is a substrate binding site. Positions 212 and 214 each coordinate Fe cation. A substrate-binding site is contributed by lysine 229. Residue histidine 284 participates in Fe cation binding. Residues serine 390 and serine 394 each carry the phosphoserine modification. Low complexity predominate over residues lysine 419–serine 433. The segment at lysine 419 to proline 445 is disordered. The residue at position 444 (serine 444) is a Phosphoserine. Lysine 505 is covalently cross-linked (Glycyl lysine isopeptide (Lys-Gly) (interchain with G-Cter in SUMO2)). The disordered stretch occupies residues valine 532–alanine 557. Position 550 is a phosphothreonine (threonine 550). Serine 558 carries the post-translational modification Phosphoserine. The CXXC-type zinc-finger motif lies at alanine 564–leucine 610. Positions 571, 574, 577, 582, 585, 588, 604, 609, 620, and 623 each coordinate Zn(2+). The segment at serine 617 to glutamate 678 adopts a PHD-type zinc-finger fold. Position 632 is a phosphothreonine (threonine 632). The Zn(2+) site is built by cysteine 642, cysteine 645, histidine 650, cysteine 653, cysteine 672, and cysteine 675. Serine 692 carries the phosphoserine modification. A disordered region spans residues leucine 705–valine 789. Threonine 713 is modified (phosphothreonine). Serine 718 and serine 731 each carry phosphoserine. Basic and acidic residues-rich tracts occupy residues serine 746–phenylalanine 757 and threonine 771–valine 789. Phosphoserine occurs at positions 825, 868, and 882. Residues cysteine 840–aspartate 886 are disordered. Positions glutamate 851–glutamate 870 are enriched in acidic residues. The F-box domain maps to aspartate 888–serine 935. LRR repeat units lie at residues tryptophan 960–leucine 981 and leucine 983–tryptophan 1009. Arginine 1019 carries the post-translational modification ADP-ribosylarginine. LRR repeat units follow at residues glycine 1047 to histidine 1072, cysteine 1073 to glycine 1102, cysteine 1103 to glycine 1127, and cysteine 1128 to lysine 1155.

The protein belongs to the JHDM1 histone demethylase family. In terms of assembly, part of a SCF (SKP1-cullin-F-box) protein ligase complex. Interacts with CBX5/HP1A; the interaction promotes CBX5 localization to chromatin. The SKP1-KDM2A complex interacts with UBB. Requires Fe(2+) as cofactor. Mono-ADP-ribosylated at Arg-1019 in response to DNA damage, leading to displacement from chromatin, resulting in increased dimethylation of histone H3 at 'Lys-36'.

Its subcellular location is the nucleus. It localises to the nucleoplasm. The protein resides in the chromosome. The enzyme catalyses N(6),N(6)-dimethyl-L-lysyl(36)-[histone H3] + 2 2-oxoglutarate + 2 O2 = L-lysyl(36)-[histone H3] + 2 formaldehyde + 2 succinate + 2 CO2. Its function is as follows. Histone demethylase that specifically demethylates 'Lys-36' of histone H3, thereby playing a central role in histone code. Preferentially demethylates dimethylated H3 'Lys-36' residue while it has weak or no activity for mono- and tri-methylated H3 'Lys-36'. May also recognize and bind to some phosphorylated proteins and promote their ubiquitination and degradation. Required to maintain the heterochromatic state. Associates with centromeres and represses transcription of small non-coding RNAs that are encoded by the clusters of satellite repeats at the centromere. Required to sustain centromeric integrity and genomic stability, particularly during mitosis. Regulates circadian gene expression by repressing the transcriptional activator activity of CLOCK-BMAL1 heterodimer and RORA in a catalytically-independent manner. The chain is Lysine-specific demethylase 2A (Kdm2a) from Mus musculus (Mouse).